The following is a 366-amino-acid chain: Ribosomal RNA large subunit methyltransferase M (366 aa).

S-adenosyl-L-methionine-binding positions include serine 188, 221–224, aspartate 240, aspartate 260, and aspartate 277; that span reads CPGG. The active-site Proton acceptor is the lysine 306.

It belongs to the class I-like SAM-binding methyltransferase superfamily. RNA methyltransferase RlmE family. RlmM subfamily. In terms of assembly, monomer.

It localises to the cytoplasm. The catalysed reaction is cytidine(2498) in 23S rRNA + S-adenosyl-L-methionine = 2'-O-methylcytidine(2498) in 23S rRNA + S-adenosyl-L-homocysteine + H(+). In terms of biological role, catalyzes the 2'-O-methylation at nucleotide C2498 in 23S rRNA. The chain is Ribosomal RNA large subunit methyltransferase M from Escherichia coli O127:H6 (strain E2348/69 / EPEC).